Consider the following 406-residue polypeptide: Betaine--homocysteine S-methyltransferase 1 (406 aa).

The Hcy-binding domain maps to 11-314 (KGILERLNAG…YHIRAIAEEL (304 aa)). Residues K40, K93, and K98 each carry the N6-succinyllysine modification. A Zn(2+)-binding site is contributed by C217. An N6-succinyllysine mark is found at K232 and K241. 2 residues coordinate Zn(2+): C299 and C300. S330 bears the Phosphoserine mark. An N6-succinyllysine mark is found at K340 and K377.

In terms of assembly, homotetramer. The cofactor is Zn(2+).

It localises to the cytoplasm. The protein resides in the cytosol. Its subcellular location is the nucleus. The enzyme catalyses L-homocysteine + glycine betaine = N,N-dimethylglycine + L-methionine. It functions in the pathway amine and polyamine degradation; betaine degradation; sarcosine from betaine: step 1/2. The protein operates within amino-acid biosynthesis; L-methionine biosynthesis via de novo pathway; L-methionine from L-homocysteine (BhmT route): step 1/1. Its function is as follows. Involved in the regulation of homocysteine metabolism. Converts betaine and homocysteine to dimethylglycine and methionine, respectively. This reaction is also required for the irreversible oxidation of choline. The chain is Betaine--homocysteine S-methyltransferase 1 (BHMT) from Pongo abelii (Sumatran orangutan).